The sequence spans 323 residues: tRNA U34 carboxymethyltransferase (323 aa).

Carboxy-S-adenosyl-L-methionine-binding positions include Lys-91, Trp-105, Lys-110, Gly-130, 152-154, 181-182, Met-196, Tyr-200, and Arg-315; these read DPT and IE.

Belongs to the class I-like SAM-binding methyltransferase superfamily. CmoB family. As to quaternary structure, homotetramer.

The enzyme catalyses carboxy-S-adenosyl-L-methionine + 5-hydroxyuridine(34) in tRNA = 5-carboxymethoxyuridine(34) in tRNA + S-adenosyl-L-homocysteine + H(+). Its function is as follows. Catalyzes carboxymethyl transfer from carboxy-S-adenosyl-L-methionine (Cx-SAM) to 5-hydroxyuridine (ho5U) to form 5-carboxymethoxyuridine (cmo5U) at position 34 in tRNAs. This Shigella flexneri protein is tRNA U34 carboxymethyltransferase.